We begin with the raw amino-acid sequence, 220 residues long: Putative O-methyltransferase Mmcs_3995 (220 aa).

S-adenosyl-L-methionine is bound by residues Val-47, Glu-69, 71–72 (GT), Ser-77, Asp-95, and Val-96. Asp-143 is a substrate binding site. S-adenosyl-L-methionine is bound at residue Asp-145.

The protein belongs to the class I-like SAM-binding methyltransferase superfamily. Cation-dependent O-methyltransferase family.

This chain is Putative O-methyltransferase Mmcs_3995, found in Mycobacterium sp. (strain MCS).